The sequence spans 396 residues: Gap junction gamma-1 protein (396 aa).

Topologically, residues 1-22 (MSWSFLTRLLEEIHNHSTFVGK) are cytoplasmic. The chain crosses the membrane as a helical span at residues 23 to 45 (IWLTVLIVFRIVLTAVGGESIYY). Residues 46–75 (DEQSKFVCNTEQPGCENVCYDAFAPLSHVR) are Extracellular-facing. The chain crosses the membrane as a helical span at residues 76 to 95 (FWVFQIILVATPSVMYLGYA). Residues 96 to 175 (IHKIAKMEHG…RRIREDGLMK (80 aa)) are Cytoplasmic-facing. The disordered stretch occupies residues 146 to 165 (LESEKENKDQNQSKPKHDGR). Positions 147–156 (ESEKENKDQN) are enriched in basic and acidic residues. The chain crosses the membrane as a helical span at residues 176 to 198 (IYVLQLLARTVFEVGFLVGQYFL). Residues 199–228 (YGFQVHPFYVCSRLPCPHKIDCFISRPTEK) lie on the Extracellular side of the membrane. The chain crosses the membrane as a helical span at residues 229–248 (TIFLLIMYGVTGLCLLLNIW). Over 249–396 (EMLHLGFGTI…SGDGKTSVWI (148 aa)) the chain is Cytoplasmic. Residues 356-396 (YNHQNNPHGSREKKAKVGSKAGSNKSSASSKSGDGKTSVWI) are disordered. Residues 373–396 (GSKAGSNKSSASSKSGDGKTSVWI) show a composition bias toward low complexity.

The protein belongs to the connexin family. Gamma-type subfamily. As to quaternary structure, a connexon is composed of a hexamer of connexins. Interacts with CNST.

The protein localises to the cell membrane. The protein resides in the cell junction. It is found in the gap junction. One gap junction consists of a cluster of closely packed pairs of transmembrane channels, the connexons, through which materials of low MW diffuse from one cell to a neighboring cell. The sequence is that of Gap junction gamma-1 protein (GJC1) from Bos taurus (Bovine).